Consider the following 200-residue polypeptide: ATP-dependent Clp protease proteolytic subunit 2 (200 aa).

S96 (nucleophile) is an active-site residue. H121 is an active-site residue.

Belongs to the peptidase S14 family. In terms of assembly, fourteen ClpP subunits assemble into 2 heptameric rings which stack back to back to give a disk-like structure with a central cavity, resembling the structure of eukaryotic proteasomes.

It is found in the cytoplasm. It catalyses the reaction Hydrolysis of proteins to small peptides in the presence of ATP and magnesium. alpha-casein is the usual test substrate. In the absence of ATP, only oligopeptides shorter than five residues are hydrolyzed (such as succinyl-Leu-Tyr-|-NHMec, and Leu-Tyr-Leu-|-Tyr-Trp, in which cleavage of the -Tyr-|-Leu- and -Tyr-|-Trp bonds also occurs).. Functionally, cleaves peptides in various proteins in a process that requires ATP hydrolysis. Has a chymotrypsin-like activity. Plays a major role in the degradation of misfolded proteins. The chain is ATP-dependent Clp protease proteolytic subunit 2 from Synechococcus sp. (strain JA-2-3B'a(2-13)) (Cyanobacteria bacterium Yellowstone B-Prime).